The sequence spans 562 residues: Tripeptidyl-peptidase 1 (562 aa).

The signal sequence occupies residues 1-19; it reads MGLQARLLGLLALVIAGKC. The propeptide at 20-194 is removed in mature form; it reads TYNPEPDQRW…PEPQQVGTVS (175 aa). A disulfide bridge connects residues Cys111 and Cys122. A Peptidase S53 domain is found at 198–562; that stretch reads GVTPSVLRQR…PALLKTLLNP (365 aa). N-linked (GlcNAc...) asparagine glycosylation is present at Asn209. A glycan (N-linked (GlcNAc...) (high mannose) asparagine) is linked at Asn221. Catalysis depends on charge relay system residues Glu271 and Asp275. N-linked (GlcNAc...) asparagine glycans are attached at residues Asn285, Asn312, and Asn442. 2 disulfides stabilise this stretch: Cys364–Cys525 and Cys521–Cys536. The active-site Charge relay system is Ser474. Residues Asp516 and Val517 each contribute to the Ca(2+) site. Positions 538, 540, and 542 each coordinate Ca(2+).

In terms of assembly, monomer. Interacts with CLN5. Interacts with CLN3. The cofactor is Ca(2+). In terms of processing, activated by autocatalytic proteolytical processing upon acidification. N-glycosylation is required for processing and activity.

The protein resides in the lysosome. The protein localises to the melanosome. It carries out the reaction Release of an N-terminal tripeptide from a polypeptide, but also has endopeptidase activity.. Functionally, lysosomal serine protease with tripeptidyl-peptidase I activity. May act as a non-specific lysosomal peptidase which generates tripeptides from the breakdown products produced by lysosomal proteinases. Requires substrates with an unsubstituted N-terminus. The polypeptide is Tripeptidyl-peptidase 1 (Tpp1) (Mus musculus (Mouse)).